The primary structure comprises 477 residues: Calcium uptake protein 1, mitochondrial (477 aa).

The transit peptide at 1-33 directs the protein to the mitochondrion; it reads MFRLNTLSALAELAVGSRWYHGASQPTQTKRRL. The interval 57–107 is disordered; it reads AESPPCVNSKKPDTEDKERNKDSGEVSSREGRAADAAAEPYPEDKKKKRSG. Residues 66–89 show a composition bias toward basic and acidic residues; it reads KKPDTEDKERNKDSGEVSSREGRA. A polybasic region region spans residues 101-112; sequence KKKKRSGFRDRK. Serine 124 is modified (phosphoserine; by PKB). The interval 128 to 131 is k/R-ring; sequence KIFR. Residues 220–255 form the EF-hand 1 domain; that stretch reads TPQRNFEIAFKMFDLNGDGEVDMEEFEQVQSIIRSQ. Aspartate 233, asparagine 235, aspartate 237, glutamate 239, and glutamate 244 together coordinate Ca(2+). The k/R-ring stretch occupies residues 261-265; sequence RHRDR. The 21-residue stretch at 356-376 folds into the EF-hand 2; degenerate domain; it reads KDGKGLTFQEVENFFTFLKNI. One can recognise an EF-hand 3 domain in the interval 410 to 445; it reads LSDHVCDVVFALFDCDGNGELSNKEFVSIMKQRLMR. Ca(2+) is bound by residues aspartate 423, aspartate 425, asparagine 427, glutamate 429, and glutamate 434. Arginine 457 is modified (asymmetric dimethylarginine). The C-helix region stretch occupies residues 457 to 467; that stretch reads RLMQAMWKCAQ.

Belongs to the MICU1 family. MICU1 subfamily. Heterodimer; disulfide-linked; heterodimerizes with MICU2 or MICU3. Homodimer; disulfide-linked. Component of the uniplex complex, composed of MCU, EMRE/SMDT1, MICU1 and MICU2 (or MICU3) in a 4:4:1:1 stoichiometry. The composition of calcium sensors within the uniplex complex can differ depending on tissues: a MICU1 homodimer can be present instead of the MICU1-MICU2 heterodimer in skeletal-muscle and kidney. MICU1 is recruited to the uniplex complex by EMRE/SMDT1, and it associates with MCU at low calcium levels, occluding the pore of the MCU channel. Associates with the MICOS complex. Interacts with SLC25A23. Interacts with CHCHD4/MIA40; which introduces the interchain disulfide bond with MICU2. Interacts (when methylated) with UCP2; leading to decrease the calcium sensitivity of MICU1. As to quaternary structure, heterodimer; disulfide-linked; heterodimerizes with MICU2 or MICU3. Heterodimerizes with MICU3 in skeletal muscle. Component of the uniplex complex, composed of MCU, EMRE/SMDT1, MICU1 and MICU2 (or MICU3) in a 4:4:1:1 stoichiometry. Also localizes to mitochondrial cristae junctions. Phosphorylation at Ser-124 by AKT1 impairs its maturation and stability. Post-translationally, asymmetric dimethylation at Arg-457 by PRMT1 decreases the calcium sensitivity of MICU1 by promoting interaction with UCP2. In terms of processing, degraded by YME1L1 when not complexed as homodimer or heterodimer. Not degraded when complexed as homodimer or heterodimer; the presence of the interchain disulfide bond protecting MICU1 from degradation by YME1L1. As to expression, expressed in skeletal muscle, heart, kidney, liver, brain, lung, fat and spleen. In terms of tissue distribution, specifically expressed in the skeletal muscle.

The protein resides in the mitochondrion intermembrane space. It is found in the mitochondrion inner membrane. Calcium sensor of the mitochondrial calcium uniporter (MCU) channel, which senses calcium level via its EF-hand domains. MICU1 and MICU2 (or MICU3) form a disulfide-linked heterodimer that stimulates and inhibits MCU activity, depending on the concentration of calcium. At low calcium levels, MICU1 occludes the pore of the MCU channel, preventing mitochondrial calcium uptake. At higher calcium levels, calcium-binding to MICU1 and MICU2 (or MICU3) induces a conformational change that weakens MCU-MICU1 interactions and moves the MICU1-MICU2 heterodimer away from the pore, allowing calcium permeation through the MCU channel. Also required to protect against manganese toxicity by preventing manganese uptake by MCU: mechanistically, manganese-binding to its EF-hand domains does not induce any conformational change, maintaining MCU pore occlusion. Acts as a regulator of mitochondrial cristae structure independently of its ability to regulate the mitochondrial calcium uniporter channel. Regulates glucose-dependent insulin secretion in pancreatic beta-cells by regulating mitochondrial calcium uptake. Induces T-helper 1-mediated autoreactivity, which is accompanied by the release of IFNG. In terms of biological role, isoform that regulates mitochondrial calcium uniporter (MCU) in the skeletal muscle. Compared to other isoforms, this isoform has higher affinity for calcium, promoting mitochondrial calcium uptake at lower calcium concentrations. This allows a rapid response of mitochondrial metabolism and ensures sustained ATP production needed for resistance and strenuous exercise. This is Calcium uptake protein 1, mitochondrial from Mus musculus (Mouse).